A 244-amino-acid polypeptide reads, in one-letter code: RNA transcription, translation and transport factor protein (244 aa).

N6-acetyllysine is present on residues lysine 20, lysine 62, and lysine 98.

Belongs to the RTRAF family. Homodimer. Interacts with FAM98A (via N- and C-terminus). Interacts with NIN; which may prevent phosphorylation of NIN. Interacts with POLR2A. Component of a tRNA-splicing ligase complex.

It is found in the nucleus. It localises to the cytoplasm. Its subcellular location is the cytosol. The protein resides in the perinuclear region. The protein localises to the cytoskeleton. It is found in the microtubule organizing center. It localises to the centrosome. In terms of biological role, RNA-binding protein involved in modulation of mRNA transcription by Polymerase II. Component of the tRNA-splicing ligase complex and is required for tRNA ligation. May be required for RNA transport. This chain is RNA transcription, translation and transport factor protein, found in Mus musculus (Mouse).